A 721-amino-acid polypeptide reads, in one-letter code: Catalase-peroxidase 1 (721 aa).

Residues 98–226 (WHAAGTYRIA…LAAVMMGLIY (129 aa)) constitute a cross-link (tryptophyl-tyrosyl-methioninium (Trp-Tyr) (with M-252)). Residue H99 is the Proton acceptor of the active site. The segment at residues 226-252 (YVNPEGVDGQPDPLKTAHDVRVTFARM) is a cross-link (tryptophyl-tyrosyl-methioninium (Tyr-Met) (with W-98)). H267 provides a ligand contact to heme b.

This sequence belongs to the peroxidase family. Peroxidase/catalase subfamily. In terms of assembly, homodimer or homotetramer. Heme b serves as cofactor. In terms of processing, formation of the three residue Trp-Tyr-Met cross-link is important for the catalase, but not the peroxidase activity of the enzyme.

The enzyme catalyses H2O2 + AH2 = A + 2 H2O. The catalysed reaction is 2 H2O2 = O2 + 2 H2O. Functionally, bifunctional enzyme with both catalase and broad-spectrum peroxidase activity. This is Catalase-peroxidase 1 from Vibrio parahaemolyticus serotype O3:K6 (strain RIMD 2210633).